A 178-amino-acid chain; its full sequence is Large ribosomal subunit protein uL13m (178 aa).

S2 carries the N-acetylserine modification.

Belongs to the universal ribosomal protein uL13 family. Component of the mitochondrial large ribosomal subunit (mt-LSU). Mature mammalian 55S mitochondrial ribosomes consist of a small (28S) and a large (39S) subunit. The 28S small subunit contains a 12S ribosomal RNA (12S mt-rRNA) and 30 different proteins. The 39S large subunit contains a 16S rRNA (16S mt-rRNA), a copy of mitochondrial valine transfer RNA (mt-tRNA(Val)), which plays an integral structural role, and 52 different proteins. Interacts with OXA1L.

It localises to the mitochondrion. In Homo sapiens (Human), this protein is Large ribosomal subunit protein uL13m (MRPL13).